A 259-amino-acid chain; its full sequence is 3-deoxy-manno-octulosonate cytidylyltransferase (259 aa).

The protein belongs to the KdsB family.

The protein resides in the cytoplasm. It catalyses the reaction 3-deoxy-alpha-D-manno-oct-2-ulosonate + CTP = CMP-3-deoxy-beta-D-manno-octulosonate + diphosphate. It participates in nucleotide-sugar biosynthesis; CMP-3-deoxy-D-manno-octulosonate biosynthesis; CMP-3-deoxy-D-manno-octulosonate from 3-deoxy-D-manno-octulosonate and CTP: step 1/1. It functions in the pathway bacterial outer membrane biogenesis; lipopolysaccharide biosynthesis. Its function is as follows. Activates KDO (a required 8-carbon sugar) for incorporation into bacterial lipopolysaccharide in Gram-negative bacteria. The protein is 3-deoxy-manno-octulosonate cytidylyltransferase of Maricaulis maris (strain MCS10) (Caulobacter maris).